Here is a 261-residue protein sequence, read N- to C-terminus: Zinc finger protein 664 (261 aa).

9 C2H2-type zinc fingers span residues 3–25 (YKCP…QKVH), 31–53 (HKCD…WRDH), 59–81 (YKCD…KKIH), 87–109 (YKCY…MRVH), 115–137 (YVCS…QRVH), 143–165 (FKCE…QRVH), 171–193 (YKCY…QRVH), 199–221 (YRCC…QRVH), and 227–249 (FKCD…QRVH). K257 participates in a covalent cross-link: Glycyl lysine isopeptide (Lys-Gly) (interchain with G-Cter in SUMO2).

Belongs to the krueppel C2H2-type zinc-finger protein family. As to expression, expressed in the organ of Corti, stria vascularis, auditory nerve and retina. Lower levels in the tongue, cerebellum, small intestine and kidney.

It localises to the nucleus. May be involved in transcriptional regulation. The chain is Zinc finger protein 664 (ZNF664) from Cavia porcellus (Guinea pig).